Here is a 467-residue protein sequence, read N- to C-terminus: ATP synthase subunit beta, sodium ion specific (467 aa).

151 to 158 is a binding site for ATP; the sequence is GGAGVGKT.

Belongs to the ATPase alpha/beta chains family. F-type ATPases have 2 components, CF(1) - the catalytic core - and CF(0) - the membrane proton channel. CF(1) has five subunits: alpha(3), beta(3), gamma(1), delta(1), epsilon(1). CF(0) has three main subunits: a, b and c.

Its subcellular location is the cell membrane. It carries out the reaction 4 Na(+)(in) + ATP + H2O = 4 Na(+)(out) + ADP + phosphate + H(+). Its function is as follows. Produces ATP from ADP in the presence of a sodium ion gradient across the membrane. The beta chain is the catalytic subunit. This chain is ATP synthase subunit beta, sodium ion specific, found in Propionigenium modestum.